We begin with the raw amino-acid sequence, 415 residues long: Tyrosine--tRNA ligase (415 aa).

Y34 lines the L-tyrosine pocket. The 'HIGH' region motif lies at 39–48 (PSAKSIHLGN). Residues Y163 and Q167 each contribute to the L-tyrosine site. A 'KMSKS' region motif is present at residues 225 to 229 (KFGKS). Position 228 (K228) interacts with ATP. Residues 349–414 (EKIIDILDRA…GKKKIFIIKK (66 aa)) form the S4 RNA-binding domain.

It belongs to the class-I aminoacyl-tRNA synthetase family. TyrS type 1 subfamily. Homodimer.

It is found in the cytoplasm. The enzyme catalyses tRNA(Tyr) + L-tyrosine + ATP = L-tyrosyl-tRNA(Tyr) + AMP + diphosphate + H(+). Functionally, catalyzes the attachment of tyrosine to tRNA(Tyr) in a two-step reaction: tyrosine is first activated by ATP to form Tyr-AMP and then transferred to the acceptor end of tRNA(Tyr). This Mycoplasma mobile (strain ATCC 43663 / 163K / NCTC 11711) (Mesomycoplasma mobile) protein is Tyrosine--tRNA ligase.